The chain runs to 262 residues: 5'-nucleotidase SurE (262 aa).

4 residues coordinate a divalent metal cation: aspartate 8, aspartate 9, serine 39, and asparagine 91.

It belongs to the SurE nucleotidase family. A divalent metal cation is required as a cofactor.

The protein resides in the cytoplasm. It carries out the reaction a ribonucleoside 5'-phosphate + H2O = a ribonucleoside + phosphate. Its function is as follows. Nucleotidase that shows phosphatase activity on nucleoside 5'-monophosphates. This is 5'-nucleotidase SurE from Geobacter sulfurreducens (strain ATCC 51573 / DSM 12127 / PCA).